The following is a 219-amino-acid chain: Clathrin light chain (219 aa).

Positions Ala32–Lys136 are disordered. An involved in binding clathrin heavy chain region spans residues Pro96–Arg158. Residues Ser99–Lys136 are compositionally biased toward basic and acidic residues.

The protein belongs to the clathrin light chain family. As to quaternary structure, clathrin coats are formed from molecules containing 3 heavy chains and 3 light chains.

The protein localises to the cytoplasmic vesicle membrane. It is found in the membrane. The protein resides in the coated pit. Functionally, clathrin is the major protein of the polyhedral coat of coated pits and vesicles. The polypeptide is Clathrin light chain (Clc) (Drosophila melanogaster (Fruit fly)).